A 420-amino-acid chain; its full sequence is Putative T-box protein 33 (420 aa).

Residues 93-291 constitute a DNA-binding region (T-box); the sequence is LWKELHYLSN…ANPTSRGDAK (199 aa). Residues 395 to 412 show a composition bias toward polar residues; sequence SPPLQPTATSPEASQNQI. The tract at residues 395-420 is disordered; that stretch reads SPPLQPTATSPEASQNQIKLEMNQYM.

It is found in the nucleus. In Caenorhabditis elegans, this protein is Putative T-box protein 33 (tbx-33).